A 29-amino-acid polypeptide reads, in one-letter code: Ceratotoxin-B (29 aa).

Homomer of four to six subunits.

The protein localises to the secreted. Functionally, female-specific peptides with potent activity against Gram-positive and Gram-negative bacteria. They have as well hemolytic activity. This chain is Ceratotoxin-B (CTXB), found in Ceratitis capitata (Mediterranean fruit fly).